Reading from the N-terminus, the 192-residue chain is Nucleotidase CA_C3379 (192 aa).

It belongs to the 5'(3')-deoxyribonucleotidase family. Mg(2+) serves as cofactor.

It carries out the reaction sugar phosphate + H2O = sugar + phosphate.. In terms of biological role, catalyzes the dephosphorylation of nucleotide monophosphates and of different sugar phosphates in vitro. The polypeptide is Nucleotidase CA_C3379 (Clostridium acetobutylicum (strain ATCC 824 / DSM 792 / JCM 1419 / IAM 19013 / LMG 5710 / NBRC 13948 / NRRL B-527 / VKM B-1787 / 2291 / W)).